The following is a 274-amino-acid chain: Proteasome subunit beta (274 aa).

The propeptide at 1 to 52 (MPDPTGVAGRLPAVFMTPGTSSFTDFLSVAAPDLLPGARGPLPAPVTDAAHG) is removed in mature form; by autocatalysis. Catalysis depends on Thr-53, which acts as the Nucleophile.

It belongs to the peptidase T1B family. As to quaternary structure, the 20S proteasome core is composed of 14 alpha and 14 beta subunits that assemble into four stacked heptameric rings, resulting in a barrel-shaped structure. The two inner rings, each composed of seven catalytic beta subunits, are sandwiched by two outer rings, each composed of seven alpha subunits. The catalytic chamber with the active sites is on the inside of the barrel. Has a gated structure, the ends of the cylinder being occluded by the N-termini of the alpha-subunits. Is capped by the proteasome-associated ATPase, ARC.

The protein resides in the cytoplasm. It carries out the reaction Cleavage of peptide bonds with very broad specificity.. It functions in the pathway protein degradation; proteasomal Pup-dependent pathway. Its activity is regulated as follows. The formation of the proteasomal ATPase ARC-20S proteasome complex, likely via the docking of the C-termini of ARC into the intersubunit pockets in the alpha-rings, may trigger opening of the gate for substrate entry. Interconversion between the open-gate and close-gate conformations leads to a dynamic regulation of the 20S proteasome proteolysis activity. In terms of biological role, component of the proteasome core, a large protease complex with broad specificity involved in protein degradation. This chain is Proteasome subunit beta, found in Parafrankia sp. (strain EAN1pec).